Reading from the N-terminus, the 880-residue chain is Alanine--tRNA ligase (880 aa).

Positions 563, 567, 665, and 669 each coordinate Zn(2+).

The protein belongs to the class-II aminoacyl-tRNA synthetase family. Zn(2+) is required as a cofactor.

It is found in the cytoplasm. The catalysed reaction is tRNA(Ala) + L-alanine + ATP = L-alanyl-tRNA(Ala) + AMP + diphosphate. In terms of biological role, catalyzes the attachment of alanine to tRNA(Ala) in a two-step reaction: alanine is first activated by ATP to form Ala-AMP and then transferred to the acceptor end of tRNA(Ala). Also edits incorrectly charged Ser-tRNA(Ala) and Gly-tRNA(Ala) via its editing domain. The protein is Alanine--tRNA ligase of Desulforudis audaxviator (strain MP104C).